The sequence spans 296 residues: MSEHQYLRLVSDILEKGDQRHDRTGVGTLSLFGAMMRFDLSKGRIPILTTKKVSYRLAIREMLWFLSGDTNIRPLVEQGVSIWSDWPLARYQAETGALLSKKEFEAKILADTEFAKKWGDLGPVYGRQWRRWQGSDGQVYDQIATLIETLKSNPSSRRMLFHGWNVAELKDMALPPCHMVYQYHVTSDGRLNSLLYQRSADVFLGLPFNLVGAAALQAMLADQAGLALGDLVWTGGDVHIYRNHIDQMKEQLAREPRAFPRLELTRHPNSITDYKIEDFAITGYDPHPPIKGAVAV.

DUMP contacts are provided by residues Arg23 and 157–158; that span reads RR. The active-site Nucleophile is Cys177. Residues 198–201, Asn209, and 239–241 each bind dUMP; these read RSAD and HIY. Asp201 lines the (6R)-5,10-methylene-5,6,7,8-tetrahydrofolate pocket. Residue Ala295 coordinates (6R)-5,10-methylene-5,6,7,8-tetrahydrofolate.

It belongs to the thymidylate synthase family. Bacterial-type ThyA subfamily. In terms of assembly, homodimer.

The protein localises to the cytoplasm. It carries out the reaction dUMP + (6R)-5,10-methylene-5,6,7,8-tetrahydrofolate = 7,8-dihydrofolate + dTMP. It functions in the pathway pyrimidine metabolism; dTTP biosynthesis. Catalyzes the reductive methylation of 2'-deoxyuridine-5'-monophosphate (dUMP) to 2'-deoxythymidine-5'-monophosphate (dTMP) while utilizing 5,10-methylenetetrahydrofolate (mTHF) as the methyl donor and reductant in the reaction, yielding dihydrofolate (DHF) as a by-product. This enzymatic reaction provides an intracellular de novo source of dTMP, an essential precursor for DNA biosynthesis. This is Thymidylate synthase from Zymomonas mobilis subsp. mobilis (strain ATCC 31821 / ZM4 / CP4).